We begin with the raw amino-acid sequence, 196 residues long: Retinol-binding protein 4 (196 aa).

Positions 1-21 (MAYTWRALLLLALAFLGSSMA) are cleaved as a signal peptide. 3 disulfide bridges follow: Cys-25-Cys-181, Cys-91-Cys-195, and Cys-141-Cys-150. Gln-119 is a binding site for substrate.

This sequence belongs to the calycin superfamily. Lipocalin family. As to quaternary structure, interacts with TTR. Interaction with TTR prevents its loss by filtration through the kidney glomeruli. Interacts with STRA6.

The protein resides in the secreted. Retinol-binding protein that mediates retinol transport in blood plasma. Delivers retinol from the liver stores to the peripheral tissues. Transfers the bound all-trans retinol to STRA6, that then facilitates retinol transport across the cell membrane. The protein is Retinol-binding protein 4 (RBP4) of Gallus gallus (Chicken).